A 238-amino-acid chain; its full sequence is Immunoglobulin superfamily member 6 (238 aa).

The N-terminal stretch at 1 to 27 is a signal peptide; sequence MGPVSTSRRGLRLGISLILLQVGVVGA. Residues 28-153 are Extracellular-facing; sequence CTVSVLQPGY…RLFSREVHSL (126 aa). The 105-residue stretch at 30–134 folds into the Ig-like C2-type domain; the sequence is VSVLQPGYLE…EPVPTAKQTG (105 aa). Cysteines 51 and 118 form a disulfide. The helical transmembrane segment at 154–174 threads the bilayer; sequence LIVLLALLAVYVTGVCVIFIV. Residues 175 to 238 lie on the Cytoplasmic side of the membrane; it reads LFRSKSNTPR…RKALPSPGRP (64 aa). The span at 215–230 shows a compositional bias: basic and acidic residues; sequence ETSHQPEQDGNYENRK. Residues 215–238 are disordered; it reads ETSHQPEQDGNYENRKALPSPGRP.

The protein resides in the membrane. This chain is Immunoglobulin superfamily member 6 (Igsf6), found in Rattus norvegicus (Rat).